A 228-amino-acid polypeptide reads, in one-letter code: Large ribosomal subunit protein bL25 (228 aa).

Positions 196-228 (EEAAVAEAQSAESAEGKAEAEAEATNEKNKSEA) are disordered. The span at 209-228 (AEGKAEAEAEATNEKNKSEA) shows a compositional bias: basic and acidic residues.

Belongs to the bacterial ribosomal protein bL25 family. CTC subfamily. In terms of assembly, part of the 50S ribosomal subunit; part of the 5S rRNA/L5/L18/L25 subcomplex. Contacts the 5S rRNA. Binds to the 5S rRNA independently of L5 and L18.

In terms of biological role, this is one of the proteins that binds to the 5S RNA in the ribosome where it forms part of the central protuberance. This chain is Large ribosomal subunit protein bL25, found in Methylorubrum extorquens (strain PA1) (Methylobacterium extorquens).